A 615-amino-acid polypeptide reads, in one-letter code: Gluconate 2-dehydrogenase flavoprotein (615 aa).

Positions 1–22 (MERGERVSVPVSGYSRGEGVTV) are cleaved as a signal peptide. Catalysis depends on His-542, which acts as the Proton acceptor.

The protein belongs to the GMC oxidoreductase family. Heterotrimer. FAD serves as cofactor.

It localises to the cell membrane. The catalysed reaction is D-gluconate + A = 2-dehydro-D-gluconate + AH2. Functionally, part of the heterotrimer that catalyzes the conversion of D-gluconate to 2-dehydro-D-gluconate. This subunit functions as the dehydrogenase. This chain is Gluconate 2-dehydrogenase flavoprotein, found in Pantoea cypripedii (Pectobacterium cypripedii).